The primary structure comprises 367 residues: Leucine-rich repeat-containing protein 28 (367 aa).

9 LRR repeats span residues 16–36 (KHKNLFLNYRNLHHFPLELLK), 42–63 (YLERLYMKRNSLTSLPENLAQK), 66–87 (NLVELYLHSNNIVVVPEAIGSL), 89–110 (KLQCLDLSDNALEIVCPEIGRL), 112–133 (ALRHLRLANNQLQFLPPEVGDL), 135–156 (ELQTLDISTNRLLTLPERLHMC), 158–180 (SLQYLTVDRNRLWYVPRHLCQLP), 181–202 (SLNELSMAGNRLAFLPLDLGRS), and 204–226 (ELQYVYVDNNIHLKGLPSYLYNK).

This is Leucine-rich repeat-containing protein 28 (LRRC28) from Homo sapiens (Human).